The sequence spans 317 residues: Petrobactin-binding protein YclQ (317 aa).

Residues 1–19 (MKKFALLFIALVTAVVISA) form the signal peptide. Cysteine 20 is lipidated: N-palmitoyl cysteine. A lipid anchor (S-diacylglycerol cysteine) is attached at cysteine 20. In terms of domain architecture, Fe/B12 periplasmic-binding spans 56 to 317 (KVVVFDFGSL…IKEVKDGLEK (262 aa)).

Belongs to the bacterial solute-binding protein 8 family. As to quaternary structure, the complex is composed of two ATP-binding proteins (YclP), two transmembrane proteins (YclN and YclO) and a solute-binding protein (YclQ). Interacts with FloT.

It is found in the cell membrane. The protein resides in the membrane raft. Part of the ABC transporter complex YclNOPQ involved in uptake of ferric-petrobactin. Petrobactin is a photoreactive 3,4-catecholate siderophore produced by many members of the B.cereus group, including B.anthracis. Binds selectively iron-free and ferric petrobactin and the petrobactin precursor 3,4-dihydroxybenzoic acid (3,4-DHB). This Bacillus subtilis (strain 168) protein is Petrobactin-binding protein YclQ (yclQ).